Here is a 65-residue protein sequence, read N- to C-terminus: Large ribosomal subunit protein bL35 (65 aa).

The segment covering 1–43 (MPKMKTRRGAAKRFAKTGSGKFKRRKQGLRHILTKKTAKRKSR) has biased composition (basic residues). The interval 1–49 (MPKMKTRRGAAKRFAKTGSGKFKRRKQGLRHILTKKTAKRKSRLGQSAT) is disordered.

It belongs to the bacterial ribosomal protein bL35 family.

The polypeptide is Large ribosomal subunit protein bL35 (Maridesulfovibrio salexigens (strain ATCC 14822 / DSM 2638 / NCIMB 8403 / VKM B-1763) (Desulfovibrio salexigens)).